The sequence spans 137 residues: uncharacterized protein (137 aa).

The protein to E.coli YfdK.

This is an uncharacterized protein from Escherichia coli (strain K12).